The primary structure comprises 339 residues: Glyoxylate reductase (339 aa).

Residues 157 to 160 (LGRI) and 239 to 241 (TAR) each bind NADP(+). Active-site residues include Arg-241 and Glu-270. His-289 functions as the Proton donor in the catalytic mechanism. 289–291 (HIA) contributes to the NADP(+) binding site.

This sequence belongs to the D-isomer specific 2-hydroxyacid dehydrogenase family. GyaR subfamily. Homodimer.

It localises to the cytoplasm. The catalysed reaction is glycolate + NAD(+) = glyoxylate + NADH + H(+). The protein is Glyoxylate reductase of Thermofilum pendens (strain DSM 2475 / Hrk 5).